The sequence spans 369 residues: Biglycan (369 aa).

A signal peptide spans 1–16 (MRPLWLLTLLLALSQA). A propeptide spanning residues 17-37 (LPFEQKGFWDFTLDDGLLMMN) is cleaved from the precursor. O-linked (Xyl...) (glycosaminoglycan) serine glycans are attached at residues serine 42 and serine 48. 2 disulfide bridges follow: cysteine 64–cysteine 70 and cysteine 68–cysteine 77. 12 LRR repeats span residues 83–103 (KTVPKEISPDTTLLDLQNNDI), 104–127 (SELRKDDFKGLQHLYALVLVNNKI), 128–151 (SKIHEKAFSPLRKLQKLYISKNHL), 152–172 (VEIPPNLPSSLVELRIHDNRI), 173–196 (RKVPKGVFSGLRNMNCIEMGGNPL), 197–221 (ENSGFEPGAFDGLKLNYLRISEAKL), 222–242 (TGIPKDLPETLNELHLDHNKI), 243–266 (QAIELEDLLRYSKLYRLGLGHNQI), 267–290 (RMIENGSLSFLPTLRELHLDNNKL), 291–313 (SRVPAGLPDLKLLQVVYLHSNNI), 314–343 (TKVGINDFCPMGFGVKRAYYNGISLFNNPV), and 344–369 (PYWEVQPATFRCVTDRLAIQFGNYKK). N-linked (GlcNAc...) asparagine glycans are attached at residues asparagine 271 and asparagine 312. The cysteines at positions 322 and 355 are disulfide-linked.

It belongs to the small leucine-rich proteoglycan (SLRP) family. SLRP class I subfamily. As to quaternary structure, homodimer. Forms a ternary complex with MFAP2 and ELN. Post-translationally, the two attached glycosaminoglycan chains can be either chondroitin sulfate or dermatan sulfate. As to expression, found in several connective tissues, especially in articular cartilages.

Its subcellular location is the secreted. The protein localises to the extracellular space. It localises to the extracellular matrix. May be involved in collagen fiber assembly. This is Biglycan (Bgn) from Rattus norvegicus (Rat).